We begin with the raw amino-acid sequence, 673 residues long: UvrABC system protein B (673 aa).

Residues 26–183 enclose the Helicase ATP-binding domain; sequence ANFEAGLAKQ…RHLTDLQYTR (158 aa). An ATP-binding site is contributed by 39–46; that stretch reads GVTGSGKT. The short motif at 92–115 is the Beta-hairpin element; that stretch reads YYDYYQPEAYVPSSDTFIEKDSSI. The Helicase C-terminal domain occupies 431–597; sequence QVDDLMSEIH…SVERPISDIM (167 aa). The interval 601 to 631 is disordered; it reads REDAAEKKSGKGRSKSRQVAEETPDYRAMKP. Over residues 618 to 630 the composition is skewed to basic and acidic residues; that stretch reads QVAEETPDYRAMK. The region spanning 635–670 is the UVR domain; it reads AGKLKSLEQKMYQHAKDLEFEAAAQIRDQIQKLKTA.

It belongs to the UvrB family. As to quaternary structure, forms a heterotetramer with UvrA during the search for lesions. Interacts with UvrC in an incision complex.

It localises to the cytoplasm. Its function is as follows. The UvrABC repair system catalyzes the recognition and processing of DNA lesions. A damage recognition complex composed of 2 UvrA and 2 UvrB subunits scans DNA for abnormalities. Upon binding of the UvrA(2)B(2) complex to a putative damaged site, the DNA wraps around one UvrB monomer. DNA wrap is dependent on ATP binding by UvrB and probably causes local melting of the DNA helix, facilitating insertion of UvrB beta-hairpin between the DNA strands. Then UvrB probes one DNA strand for the presence of a lesion. If a lesion is found the UvrA subunits dissociate and the UvrB-DNA preincision complex is formed. This complex is subsequently bound by UvrC and the second UvrB is released. If no lesion is found, the DNA wraps around the other UvrB subunit that will check the other stand for damage. This is UvrABC system protein B from Xanthomonas oryzae pv. oryzae (strain PXO99A).